The following is a 236-amino-acid chain: Ribosomal RNA large subunit methyltransferase E (236 aa).

S-adenosyl-L-methionine-binding residues include Gly76, Trp78, Asp99, Asp115, and Asp140. Catalysis depends on Lys180, which acts as the Proton acceptor.

This sequence belongs to the class I-like SAM-binding methyltransferase superfamily. RNA methyltransferase RlmE family.

It localises to the cytoplasm. The catalysed reaction is uridine(2552) in 23S rRNA + S-adenosyl-L-methionine = 2'-O-methyluridine(2552) in 23S rRNA + S-adenosyl-L-homocysteine + H(+). Specifically methylates the uridine in position 2552 of 23S rRNA at the 2'-O position of the ribose in the fully assembled 50S ribosomal subunit. The polypeptide is Ribosomal RNA large subunit methyltransferase E (Rhodopseudomonas palustris (strain HaA2)).